The primary structure comprises 92 residues: Acylphosphatase (92 aa).

The Acylphosphatase-like domain maps to 5–92; sequence RVKVKVNGRV…GVFERFEVRF (88 aa). Catalysis depends on residues Arg-20 and Asn-38.

The protein belongs to the acylphosphatase family.

It carries out the reaction an acyl phosphate + H2O = a carboxylate + phosphate + H(+). The sequence is that of Acylphosphatase (acyP) from Syntrophotalea carbinolica (strain DSM 2380 / NBRC 103641 / GraBd1) (Pelobacter carbinolicus).